We begin with the raw amino-acid sequence, 554 residues long: Arginine--tRNA ligase (554 aa).

The 'HIGH' region signature appears at 132–142 (ANPTGPIHLGG).

The protein belongs to the class-I aminoacyl-tRNA synthetase family. In terms of assembly, monomer.

It localises to the cytoplasm. It carries out the reaction tRNA(Arg) + L-arginine + ATP = L-arginyl-tRNA(Arg) + AMP + diphosphate. The sequence is that of Arginine--tRNA ligase from Clavibacter sepedonicus (Clavibacter michiganensis subsp. sepedonicus).